The following is an 80-amino-acid chain: NAD(P)H-quinone oxidoreductase subunit O (80 aa).

The protein belongs to the complex I NdhO subunit family. As to quaternary structure, NDH-1 can be composed of about 15 different subunits; different subcomplexes with different compositions have been identified which probably have different functions.

It is found in the cellular thylakoid membrane. It carries out the reaction a plastoquinone + NADH + (n+1) H(+)(in) = a plastoquinol + NAD(+) + n H(+)(out). The enzyme catalyses a plastoquinone + NADPH + (n+1) H(+)(in) = a plastoquinol + NADP(+) + n H(+)(out). Functionally, NDH-1 shuttles electrons from an unknown electron donor, via FMN and iron-sulfur (Fe-S) centers, to quinones in the respiratory and/or the photosynthetic chain. The immediate electron acceptor for the enzyme in this species is believed to be plastoquinone. Couples the redox reaction to proton translocation, and thus conserves the redox energy in a proton gradient. Cyanobacterial NDH-1 also plays a role in inorganic carbon-concentration. This is NAD(P)H-quinone oxidoreductase subunit O from Prochlorococcus marinus (strain MIT 9515).